The chain runs to 454 residues: GTPase Der (454 aa).

EngA-type G domains follow at residues 4–167 (AIVA…SEDK) and 188–363 (LQLA…ASWQ). GTP is bound by residues 10–17 (GKPNVGKS), 56–60 (DTPGL), 121–124 (NKTE), 194–201 (GRPNCGKS), 241–245 (DTAGV), and 306–309 (NKCD). Residues 364 to 450 (KRVTTGTLNQ…PVRLSFVKGK (87 aa)) enclose the KH-like domain.

This sequence belongs to the TRAFAC class TrmE-Era-EngA-EngB-Septin-like GTPase superfamily. EngA (Der) GTPase family. As to quaternary structure, associates with the 50S ribosomal subunit.

In terms of biological role, GTPase that plays an essential role in the late steps of ribosome biogenesis. The protein is GTPase Der of Orientia tsutsugamushi (strain Boryong) (Rickettsia tsutsugamushi).